Reading from the N-terminus, the 394-residue chain is Protein-glutamate methylesterase/protein-glutamine glutaminase of group 2 operon (394 aa).

Residues 21 to 139 enclose the Response regulatory domain; the sequence is RVMVVDDSAV…ELTGADTFKR (119 aa). At Asp72 the chain carries 4-aspartylphosphate. Residues 148-201 form a disordered region; sequence LGAAARRSGPRREGTAAARPPGAAAQPTSGYTLPSPVRAKPETGPLTVRPLPPD. The span at 162–172 shows a compositional bias: low complexity; the sequence is TAAARPPGAAA. One can recognise a CheB-type methylesterase domain in the interval 200 to 382; sequence PDGRPDVIAI…SAILPLKEIG (183 aa). Residues Ser212, His238, and Asp334 contribute to the active site.

This sequence belongs to the CheB family. Phosphorylated by CheA. Phosphorylation of the N-terminal regulatory domain activates the methylesterase activity.

The protein localises to the cytoplasm. It carries out the reaction [protein]-L-glutamate 5-O-methyl ester + H2O = L-glutamyl-[protein] + methanol + H(+). It catalyses the reaction L-glutaminyl-[protein] + H2O = L-glutamyl-[protein] + NH4(+). Functionally, involved in chemotaxis. Part of a chemotaxis signal transduction system that modulates chemotaxis in response to various stimuli. Catalyzes the demethylation of specific methylglutamate residues introduced into the chemoreceptors (methyl-accepting chemotaxis proteins or MCP) by CheR. Also mediates the irreversible deamidation of specific glutamine residues to glutamic acid. This is Protein-glutamate methylesterase/protein-glutamine glutaminase of group 2 operon from Rhodospirillum centenum (strain ATCC 51521 / SW).